We begin with the raw amino-acid sequence, 139 residues long: Cytochrome c2 (139 aa).

The signal sequence occupies residues 1–25 (MVKKLLTILSIAATAGSLSIGTASA). Position 26 is a pyrrolidone carboxylic acid (glutamine 26). Positions 38, 41, 42, and 118 each coordinate heme c.

Belongs to the cytochrome c family. Post-translationally, binds 1 heme c group covalently per subunit.

Functionally, cytochrome c2 is found mainly in purple, non-sulfur, photosynthetic bacteria where it functions as the electron donor to the oxidized bacteriochlorophyll in the photophosphorylation pathway. However, it may also have a role in the respiratory chain and is found in some non-photosynthetic bacteria. This is Cytochrome c2 (cycA) from Rhodopseudomonas palustris (strain ATCC BAA-98 / CGA009).